Reading from the N-terminus, the 523-residue chain is 2-isopropylmalate synthase (523 aa).

Residues 5–267 form the Pyruvate carboxyltransferase domain; the sequence is VIIFDTTLRD…HTNINHHEIW (263 aa). Positions 14, 202, 204, and 238 each coordinate Mn(2+). A regulatory domain region spans residues 392–523; that stretch reads RLDYFSVQSG…QNKENNKETV (132 aa).

Belongs to the alpha-IPM synthase/homocitrate synthase family. LeuA type 1 subfamily. Homodimer. It depends on Mn(2+) as a cofactor.

The protein resides in the cytoplasm. It carries out the reaction 3-methyl-2-oxobutanoate + acetyl-CoA + H2O = (2S)-2-isopropylmalate + CoA + H(+). It participates in amino-acid biosynthesis; L-leucine biosynthesis; L-leucine from 3-methyl-2-oxobutanoate: step 1/4. In terms of biological role, catalyzes the condensation of the acetyl group of acetyl-CoA with 3-methyl-2-oxobutanoate (2-ketoisovalerate) to form 3-carboxy-3-hydroxy-4-methylpentanoate (2-isopropylmalate). This is 2-isopropylmalate synthase from Klebsiella pneumoniae (strain 342).